Consider the following 260-residue polypeptide: Tropinone reductase 2 (260 aa).

13-37 is a binding site for NADP(+); the sequence is LVTGGSRGIGYGIVEELANLGASVY. Serine 146 contributes to the substrate binding site. The active-site Proton acceptor is tyrosine 159.

Belongs to the short-chain dehydrogenases/reductases (SDR) family.

It catalyses the reaction pseudotropine + NADP(+) = tropinone + NADPH + H(+). The protein operates within alkaloid biosynthesis; tropane alkaloid biosynthesis. In terms of biological role, catalyzes the stereospecific reduction of tropinone to pseudotropine. In Hyoscyamus niger (Black henbane), this protein is Tropinone reductase 2 (TR2).